The primary structure comprises 357 residues: UDP-N-acetylglucosamine--N-acetylmuramyl-(pentapeptide) pyrophosphoryl-undecaprenol N-acetylglucosamine transferase (357 aa).

UDP-N-acetyl-alpha-D-glucosamine is bound by residues 13–15, arginine 166, serine 197, and glutamine 292; that span reads SAG.

It belongs to the glycosyltransferase 28 family. MurG subfamily.

It is found in the cell membrane. It carries out the reaction di-trans,octa-cis-undecaprenyl diphospho-N-acetyl-alpha-D-muramoyl-L-alanyl-D-glutamyl-meso-2,6-diaminopimeloyl-D-alanyl-D-alanine + UDP-N-acetyl-alpha-D-glucosamine = di-trans,octa-cis-undecaprenyl diphospho-[N-acetyl-alpha-D-glucosaminyl-(1-&gt;4)]-N-acetyl-alpha-D-muramoyl-L-alanyl-D-glutamyl-meso-2,6-diaminopimeloyl-D-alanyl-D-alanine + UDP + H(+). Its pathway is cell wall biogenesis; peptidoglycan biosynthesis. Cell wall formation. Catalyzes the transfer of a GlcNAc subunit on undecaprenyl-pyrophosphoryl-MurNAc-pentapeptide (lipid intermediate I) to form undecaprenyl-pyrophosphoryl-MurNAc-(pentapeptide)GlcNAc (lipid intermediate II). This Clostridium novyi (strain NT) protein is UDP-N-acetylglucosamine--N-acetylmuramyl-(pentapeptide) pyrophosphoryl-undecaprenol N-acetylglucosamine transferase.